A 520-amino-acid polypeptide reads, in one-letter code: Leucine aminopeptidase 1 (520 aa).

Mn(2+) contacts are provided by lysine 288 and aspartate 293. Lysine 300 is an active-site residue. Aspartate 313, aspartate 373, and glutamate 375 together coordinate Mn(2+). Arginine 377 is an active-site residue.

It belongs to the peptidase M17 family. As to quaternary structure, homohexamer (dimer of homotrimers). It depends on Mn(2+) as a cofactor.

The protein resides in the cytoplasm. It carries out the reaction Release of an N-terminal amino acid, Xaa-|-Yaa-, in which Xaa is preferably Leu, but may be other amino acids including Pro although not Arg or Lys, and Yaa may be Pro. Amino acid amides and methyl esters are also readily hydrolyzed, but rates on arylamides are exceedingly low.. The catalysed reaction is Release of N-terminal proline from a peptide.. Presumably involved in the processing and regular turnover of intracellular proteins. Catalyzes the removal of unsubstituted N-terminal amino acids from various peptides. Possesses leucine aminopeptidase activity against the model substrate leucine-amido methyl coumarin. Possesses Cys-Gly dipeptidase activity. In addition, can cleave Cys-Leu and Leu-Cys dipeptides. Functionally, functions as a molecular chaperone to protect proteins from heat-induced damage. In Arabidopsis thaliana (Mouse-ear cress), this protein is Leucine aminopeptidase 1.